Here is a 330-residue protein sequence, read N- to C-terminus: Phospho-N-acetylmuramoyl-pentapeptide-transferase (330 aa).

The next 10 membrane-spanning stretches (helical) occupy residues 3 to 23 (SVVL…SSFI), 49 to 69 (TPTM…AVVA), 71 to 91 (PNPA…VGLY), 111 to 131 (FLLL…YVGV), 145 to 165 (VLGP…FVIV), 179 to 199 (GLAA…AFLE), 204 to 224 (LAII…YNSH), 228 to 248 (IFMG…AAIL), 256 to 276 (PVIG…VVVF), and 307 to 327 (FWIV…FFLY).

The protein belongs to the glycosyltransferase 4 family. MraY subfamily. Mg(2+) serves as cofactor.

Its subcellular location is the cell membrane. The enzyme catalyses UDP-N-acetyl-alpha-D-muramoyl-L-alanyl-gamma-D-glutamyl-meso-2,6-diaminopimeloyl-D-alanyl-D-alanine + di-trans,octa-cis-undecaprenyl phosphate = di-trans,octa-cis-undecaprenyl diphospho-N-acetyl-alpha-D-muramoyl-L-alanyl-D-glutamyl-meso-2,6-diaminopimeloyl-D-alanyl-D-alanine + UMP. Its pathway is cell wall biogenesis; peptidoglycan biosynthesis. Functionally, catalyzes the initial step of the lipid cycle reactions in the biosynthesis of the cell wall peptidoglycan: transfers peptidoglycan precursor phospho-MurNAc-pentapeptide from UDP-MurNAc-pentapeptide onto the lipid carrier undecaprenyl phosphate, yielding undecaprenyl-pyrophosphoryl-MurNAc-pentapeptide, known as lipid I. The sequence is that of Phospho-N-acetylmuramoyl-pentapeptide-transferase from Rubrobacter xylanophilus (strain DSM 9941 / JCM 11954 / NBRC 16129 / PRD-1).